The chain runs to 2321 residues: Neurogenic locus notch homolog protein 3 (2321 aa).

Over residues 1–14 the composition is skewed to basic residues; sequence MGPGARGRRRRRRP. The interval 1–26 is disordered; sequence MGPGARGRRRRRRPMSPPPPPPPVRA. Residues 1–39 form the signal peptide; the sequence is MGPGARGRRRRRRPMSPPPPPPPVRALPLLLLLAGPGAA. The span at 15–25 shows a compositional bias: pro residues; the sequence is MSPPPPPPPVR. EGF-like domains are found at residues 40–77, 78–118, and 119–156; these read APPC…ERCQ, LEDP…PDCS, and LPDP…RSCR. Over 40 to 1643 the chain is Extracellular; it reads APPCLDGSPC…LEPPEPSVPL (1604 aa). Disulfide bonds link Cys43–Cys55, Cys49–Cys65, Cys67–Cys76, Cys82–Cys93, Cys87–Cys106, Cys108–Cys117, Cys123–Cys134, Cys128–Cys144, Cys146–Cys155, Cys162–Cys174, Cys168–Cys183, Cys185–Cys194, Cys201–Cys212, Cys206–Cys222, Cys224–Cys233, Cys240–Cys251, Cys245–Cys260, Cys262–Cys271, Cys278–Cys291, Cys285–Cys300, Cys302–Cys311, Cys318–Cys329, Cys323–Cys338, Cys340–Cys349, Cys355–Cys366, Cys360–Cys377, Cys379–Cys388, Cys395–Cys408, Cys402–Cys417, Cys419–Cys428, Cys435–Cys446, Cys440–Cys455, Cys457–Cys466, Cys473–Cys484, Cys478–Cys493, Cys495–Cys504, Cys511–Cys522, Cys516–Cys531, Cys533–Cys542, Cys549–Cys559, Cys554–Cys568, Cys570–Cys579, Cys586–Cys597, Cys591–Cys606, Cys608–Cys617, Cys624–Cys634, Cys629–Cys643, Cys645–Cys654, Cys661–Cys672, Cys666–Cys681, Cys683–Cys692, Cys699–Cys709, Cys704–Cys718, Cys720–Cys729, Cys738–Cys749, Cys743–Cys758, Cys760–Cys769, Cys775–Cys786, Cys780–Cys796, Cys798–Cys807, Cys814–Cys826, Cys820–Cys835, Cys837–Cys846, Cys853–Cys864, Cys858–Cys873, Cys875–Cys884, Cys891–Cys901, Cys896–Cys910, Cys912–Cys921, Cys928–Cys939, Cys933–Cys948, Cys950–Cys959, Cys966–Cys977, Cys971–Cys986, Cys988–Cys997, Cys1004–Cys1015, Cys1009–Cys1022, Cys1024–Cys1033, Cys1040–Cys1061, Cys1055–Cys1070, Cys1072–Cys1081, Cys1088–Cys1099, Cys1093–Cys1108, Cys1110–Cys1119, Cys1126–Cys1137, Cys1131–Cys1146, Cys1148–Cys1157, Cys1164–Cys1182, Cys1176–Cys1191, Cys1193–Cys1202, Cys1209–Cys1222, Cys1214–Cys1232, Cys1234–Cys1243, Cys1250–Cys1261, Cys1255–Cys1275, Cys1277–Cys1286, Cys1293–Cys1304, Cys1298–Cys1313, and Cys1315–Cys1324. One can recognise an EGF-like 4; calcium-binding domain in the interval 158–195; the sequence is DVDECRVGEPCRHGGTCLNTPGSFRCQCPAGYTGPLCE. Positions 197 to 234 constitute an EGF-like 5 domain; sequence PAVPCAPSPCRNGGTCRQSGDLTYDCACLPGFEGQNCE. Positions 236 to 272 constitute an EGF-like 6; calcium-binding domain; sequence NVDDCPGHRCLNGGTCVDGVNTYNCQCPPEWTGQFCT. Residues 274 to 312 enclose the EGF-like 7 domain; the sequence is DVDECQLQPNACHNGGTCFNTLGGHSCVCVNGWTGESCS. An EGF-like 8; calcium-binding domain is found at 314-350; the sequence is NIDDCATAVCFHGATCHDRVASFYCACPMGKTGLLCH. The region spanning 351-389 is the EGF-like 9 domain; the sequence is LDDACVSNPCHEDAICDTNPVNGRAICTCPPGFTGGACD. One can recognise an EGF-like 10; calcium-binding domain in the interval 391 to 429; sequence DVDECSIGANPCEHLGRCVNTQGSFLCQCGRGYTGPRCE. An EGF-like 11; calcium-binding domain is found at 431-467; sequence DVNECLSGPCRNQATCLDRIGQFTCICMAGFTGTYCE. Residues 469–505 enclose the EGF-like 12; calcium-binding domain; the sequence is DIDECQSSPCVNGGVCKDRVNGFSCTCPSGFSGSTCQ. The EGF-like 13; calcium-binding domain maps to 507 to 543; that stretch reads DVDECASTPCRNGAKCVDQPDGYECRCAEGFEGTLCD. Residues 545 to 580 enclose the EGF-like 14; calcium-binding domain; it reads NVDDCSPDPCHHGRCVDGIASFSCACAPGYTGTRCE. The 37-residue stretch at 582-618 folds into the EGF-like 15; calcium-binding domain; the sequence is QVDECRSQPCRHGGKCLDLVDKYLCRCPSGTTGVNCE. Residues 620-655 form the EGF-like 16; calcium-binding domain; it reads NIDDCASNPCTFGVCRDGINRYDCVCQPGFTGPLCN. The EGF-like 17; calcium-binding domain occupies 657-693; it reads EINECASSPCGEGGSCVDGENGFRCLCPPGSLPPLCL. EGF-like domains are found at residues 695–730, 734–770, and 771–808; these read PSHP…PRCS, ARDA…RQCE, and LLSP…PRCQ. Residues 810-847 form the EGF-like 21; calcium-binding domain; sequence DVDECAGPAPCGPHGICTNLAGSFSCTCHGGYTGPSCD. Residues 849–885 form the EGF-like 22; calcium-binding domain; that stretch reads DINDCDPNPCLNGGSCQDGVGSFSCSCLPGFAGPRCA. An EGF-like 23; calcium-binding domain is found at 887 to 922; it reads DVDECLSNPCGPGTCTDHVASFTCTCPPGYGGFHCE. EGF-like domains lie at 924–960, 962–998, 1000–1034, 1036–1082, and 1084–1120; these read DLPD…AHCQ, EADP…PQCQ, LVDW…RLCD, RSLP…SHCE, and EVDP…DNCE. The EGF-like 29; calcium-binding domain occupies 1122–1158; that stretch reads DVDECASQPCQHGGSCIDLVARYLCSCPPGTLGVLCE. Residues 1160-1203 form the EGF-like 30; calcium-binding domain; sequence NEDDCGPGPPLDSGPRCLHNGTCVDLVGGFRCTCPPGYTGLRCE. Asn1179 carries N-linked (GlcNAc...) asparagine glycosylation. EGF-like domains lie at 1205–1244, 1246–1287, 1289–1325, and 1335–1373; these read DINE…PRCQ, VLSP…PRCE, VARS…PSCR, and SNAS…PRCE. An N-linked (GlcNAc...) asparagine glycan is attached at Asn1336. 12 disulfides stabilise this stretch: Cys1339–Cys1350, Cys1344–Cys1361, Cys1363–Cys1372, Cys1387–Cys1410, Cys1392–Cys1405, Cys1401–Cys1417, Cys1428–Cys1451, Cys1433–Cys1446, Cys1442–Cys1458, Cys1467–Cys1493, Cys1475–Cys1488, and Cys1484–Cys1500. LNR repeat units follow at residues 1387 to 1427, 1428 to 1458, and 1467 to 1505; these read CPRA…PWRQ, CEAL…NFDC, and CNPV…SEVP. Residue Asn1438 is glycosylated (N-linked (GlcNAc...) asparagine). Residues 1644-1664 traverse the membrane as a helical segment; sequence LPLLVAGAVLLLVILVLGVMV. Topologically, residues 1665–2321 are cytoplasmic; the sequence is ARRKREHSTL…EVTPKRQVLA (657 aa). ANK repeat units lie at residues 1838-1867, 1871-1901, 1905-1934, 1938-1967, and 1971-2000; these read TGET…DTNA, SGRT…DLDA, DGST…DVNA, LGKS…NKDM, and KEET…NREI. Positions 2024–2120 are disordered; that stretch reads LDQPSGPRSP…FGGPPASPGG (97 aa). The span at 2039 to 2053 shows a compositional bias: low complexity; it reads LGPLLCPPGAFLPGL. An Omega-N-methylarginine modification is found at Arg2174. Residues 2190–2321 form a disordered region; it reads APGPQLLNPG…EVTPKRQVLA (132 aa). Over residues 2269–2289 the composition is skewed to low complexity; that stretch reads STPSPATATGAMATTTGALPA. Polar residues predominate over residues 2296 to 2308; that stretch reads VPSSLAQAQTQLG.

This sequence belongs to the NOTCH family. Heterodimer of a C-terminal fragment N(TM) and a N-terminal fragment N(EC) which are probably linked by disulfide bonds. Interacts with MAML1, MAML2 and MAML3 which act as transcriptional coactivators for NOTCH3. Interacts with PSMA1. Interacts with HIF1AN. Post-translationally, synthesized in the endoplasmic reticulum as an inactive form which is proteolytically cleaved by a furin-like convertase in the trans-Golgi network before it reaches the plasma membrane to yield an active, ligand-accessible form. Cleavage results in a C-terminal fragment N(TM) and a N-terminal fragment N(EC). Following ligand binding, it is cleaved by TNF-alpha converting enzyme (TACE) to yield a membrane-associated intermediate fragment called notch extracellular truncation (NEXT). This fragment is then cleaved by presenilin dependent gamma-secretase to release a notch-derived peptide containing the intracellular domain (NICD) from the membrane. In terms of processing, phosphorylated. Hydroxylated by HIF1AN. In terms of tissue distribution, ubiquitously expressed in fetal and adult tissues.

It is found in the cell membrane. The protein resides in the nucleus. In terms of biological role, functions as a receptor for membrane-bound ligands Jagged1, Jagged2 and Delta1 to regulate cell-fate determination. Upon ligand activation through the released notch intracellular domain (NICD) it forms a transcriptional activator complex with RBPJ/RBPSUH and activates genes of the enhancer of split locus. Affects the implementation of differentiation, proliferation and apoptotic programs. This is Neurogenic locus notch homolog protein 3 (NOTCH3) from Homo sapiens (Human).